The chain runs to 671 residues: MDGEEAADIDETNSSNPHAAAVVATEMQAVAEAERPEEQQQQQMPQTSSGEADGDVDGDGVSAIAALATRVRLENMLEVVDNMFDEVSELMVDVTELMQRASELTGTTTPTPTAPENQAENAPEIEPAQPATPPEIAELLEEAIAANPLGHNVLNPGDDARSISSRHSGSDMSLDSPGSEDDSDAEAVPRWIIPENRVRSAVDMLVSQARNQDGGIATLLRRENFLQRVRSMVFSQDRVRGRESDEANLDAGNVVDEELSPELSPAPLDIDMEEGVRFDTNLPAEHSYFGPNLNRVPGVDYLEVGSTHRMLIFMHQHILFPGEVLPFMIDGSIIDEEIHDTGRDGVIFGVGFPLMQPPDDNPHKLYGVTCQIYEKGESGRQMVFYKSRALQRIVINCDDIQGPPQYIARNPTMKCYSKVKVLPEYFLPEPLKCIDMGSLNRFRDLPSMQDKFRRYQLTSTPWPLEACEEYSFEHIVEMARKKLEVHKIDTMPKCPIQLSYWLVRNLHLTEKMMRLTFLTDSVNTRLQIIGSTLKQESLFYCRYCNSSLAYCSDLFAMSKHGVQTQYCNSAGYIHETNTVYRIIAHAVGYSGEPSTEFSWFPGYQWHIIICKFCAQHVGWEFKAVDPNLAPKVFFGLAGSSVRIGKTSERTPTQGNPFVVRNLLHLVFREIE.

Over residues 1–11 the composition is skewed to acidic residues; sequence MDGEEAADIDE. Disordered stretches follow at residues 1-59, 104-130, and 150-187; these read MDGE…VDGD, LTGTTTPTPTAPENQAENAPEIEPAQP, and GHNVLNPGDDARSISSRHSGSDMSLDSPGSEDDSDAEA. Composition is skewed to low complexity over residues 39 to 51 and 105 to 115; these read QQQQQMPQTSSGE and TGTTTPTPTAP. The span at 162–173 shows a compositional bias: polar residues; sequence SISSRHSGSDMS. The region spanning 309–537 is the Lon N-terminal domain; the sequence is RMLIFMHQHI…IIGSTLKQES (229 aa). The CULT domain maps to 536-645; that stretch reads ESLFYCRYCN…LAGSSVRIGK (110 aa). Zn(2+)-binding residues include C541, C544, C610, and C613.

This sequence belongs to the CRBN family. In terms of assembly, likely a component of a DCX (DDB1-CUL4-X-box) protein ligase complex. May interact with pic/DDB1. Ubiquitinated.

It localises to the nucleus. The protein operates within protein modification; protein ubiquitination. Its function is as follows. Substrate recognition component of a DCX (DDB1-CUL4-X-box) E3 protein ligase complex that mediates the ubiquitination and subsequent proteasomal degradation of target proteins. Has an essential role in mediating growth by negatively regulating insulin signaling. It also has a role in maintaining presynaptic function in the neuromuscular junction synapses of third-instar larvae. The polypeptide is Protein cereblon (Drosophila grimshawi (Hawaiian fruit fly)).